We begin with the raw amino-acid sequence, 426 residues long: MGNCLDSSAKVDNSNHSPHANSASSGSKVSSKTSRSTGPSGLSTTSYSTDSSFGPLPTLRTEGEILSSPNLKAFTFNELKNATKNFRQDNLLGEGGFGCVFKGWIDQTSLTASRPGSGIVVAVKQLKPEGFQGHKEWLTEVNYLGQLSHPNLVLLVGYCAEGENRLLVYEFMPKGSLENHLFRRGAQPLTWAIRMKVAVGAAKGLTFLHEAKSQVIYRDFKAANILLDADFNAKLSDFGLAKAGPTGDNTHVSTKVIGTHGYAAPEYVATGRLTAKSDVYSFGVVLLELISGRRAMDNSNGGNEYSLVDWATPYLGDKRKLFRIMDTKLGGQYPQKGAFTAANLALQCLNPDAKLRPKMSEVLVTLEQLESVAKPGTKHTQMESPRFHHSSVMQKSPVRYSHDRPLLHMTPGASPLPSYTQSPRVR.

Residues 1–54 (MGNCLDSSAKVDNSNHSPHANSASSGSKVSSKTSRSTGPSGLSTTSYSTDSSFG) are disordered. Glycine 2 is lipidated: N-myristoyl glycine. Cysteine 4 carries the S-palmitoyl cysteine lipid modification. Low complexity predominate over residues 14-38 (SNHSPHANSASSGSKVSSKTSRSTG). Residues 39-52 (PSGLSTTSYSTDSS) show a composition bias toward polar residues. A Phosphothreonine modification is found at threonine 75. A Protein kinase domain is found at 86 to 369 (FRQDNLLGEG…SEVLVTLEQL (284 aa)). ATP is bound by residues 92–100 (LGEGGFGCV) and lysine 124. Phosphotyrosine is present on tyrosine 169. Catalysis depends on aspartate 219, which acts as the Proton acceptor. Serine 253 carries the post-translational modification O-UMP-serine. Residue serine 253 is modified to Phosphoserine. Phosphothreonine is present on residues threonine 254 and threonine 259. Threonine 254 is subject to O-UMP-threonine. The residue at position 267 (tyrosine 267) is a Phosphotyrosine. The disordered stretch occupies residues 374–426 (KPGTKHTQMESPRFHHSSVMQKSPVRYSHDRPLLHMTPGASPLPSYTQSPRVR). Residues 417 to 426 (PSYTQSPRVR) are compositionally biased toward polar residues.

It belongs to the protein kinase superfamily. Ser/Thr protein kinase family. Interacts with FLS2. Interacts with the Xanthomonas campestris effector XopAC/AvrAC; the recognition of X.campestris effector XopAC/AvrAC requires the presence of RKS1 and RPP13L4/ZAR1. Component of a stable high-order oligomeric complex made of RKS1 and RPP13L4/ZAR1 which recruits X.campestris effector XopAC/AvrAC-mediated uridylylated PBL2 in the presence of ATP to form a wheel-like pentameric resistosome; this complex triggers immunity toward X.campestris in vascular tissues. Binds to RKS1 when uridylylated. Post-translationally, uridylylated at Ser-253 and Thr-254 by Xanthomonas campestris effector AvrAC/XopAC; this uridylylation is necessary for specific recruitment to RKS1 and to trigger immunity. In terms of tissue distribution, strongly expressed in leaves, moderately in roots, and barely in flowers, mostly in pedicels.

Its subcellular location is the cell membrane. It is found in the nucleus. The catalysed reaction is L-seryl-[protein] + ATP = O-phospho-L-seryl-[protein] + ADP + H(+). It carries out the reaction L-threonyl-[protein] + ATP = O-phospho-L-threonyl-[protein] + ADP + H(+). Its function is as follows. Involved in disease resistance signaling. Contributes to pathogen-associated molecular pattern (PAMP)-triggered immunity (PTI) signaling and defense responses downstream of FLS2. Acts as a BIK1 decoy and enables Xanthomonas campestris AvrAC/XopAC detection; X.campestris effector AvrAC/XopAC-mediated uridylylation promotes the formation of a complex with RKS1 and RPP13L4/ZAR1 which, in turn, activates effector-triggered immunity (ETI) against X.campestris. Promotes, when uridylylated by AvrAC/XopAC, the release of ADP from the inactive RKS1-ZAR1 complex, thus activating the resistosome. The sequence is that of Probable serine/threonine-protein kinase PBL2 from Arabidopsis thaliana (Mouse-ear cress).